The chain runs to 162 residues: uncharacterized protein (162 aa).

A run of 4 helical transmembrane segments spans residues 10–30 (ILSF…MLIL), 50–70 (IVEL…ALYN), 96–116 (IAQY…IILL), and 125–145 (FTAI…LFIF).

It is found in the cell membrane. This is an uncharacterized protein from Methanocaldococcus jannaschii (strain ATCC 43067 / DSM 2661 / JAL-1 / JCM 10045 / NBRC 100440) (Methanococcus jannaschii).